The following is a 245-amino-acid chain: Probable ABC transporter ATP-binding protein p29 (245 aa).

Residues 7–245 (LSFEKVSIIY…KEQLYKIYDN (239 aa)) form the ABC transporter domain. 39–46 (GKSGVGKS) contacts ATP.

This sequence belongs to the ABC transporter superfamily.

Functionally, part of a high-affinity transport system. This Mycoplasma genitalium (strain ATCC 33530 / DSM 19775 / NCTC 10195 / G37) (Mycoplasmoides genitalium) protein is Probable ABC transporter ATP-binding protein p29 (p29).